Here is a 178-residue protein sequence, read N- to C-terminus: N-alpha-acetyltransferase 20 (178 aa).

The N-acetyltransferase domain occupies 2-157; that stretch reads TSLRPFTCDD…DAYDMRKALS (156 aa). The tract at residues 159-178 is disordered; it reads DTEKKSIVPLPHPVRPEDIE.

Belongs to the acetyltransferase family. ARD1 subfamily. As to quaternary structure, component of the N-terminal acetyltransferase B (NatB) complex which is composed of naa20 and naa25.

The protein localises to the cytoplasm. Its subcellular location is the nucleus. The enzyme catalyses N-terminal L-methionyl-L-asparaginyl-[protein] + acetyl-CoA = N-terminal N(alpha)-acetyl-L-methionyl-L-asparaginyl-[protein] + CoA + H(+). The catalysed reaction is N-terminal L-methionyl-L-glutaminyl-[protein] + acetyl-CoA = N-terminal N(alpha)-acetyl-L-methionyl-L-glutaminyl-[protein] + CoA + H(+). It catalyses the reaction N-terminal L-methionyl-L-aspartyl-[protein] + acetyl-CoA = N-terminal N(alpha)-acetyl-L-methionyl-L-aspartyl-[protein] + CoA + H(+). It carries out the reaction N-terminal L-methionyl-L-glutamyl-[protein] + acetyl-CoA = N-terminal N(alpha)-acetyl-L-methionyl-L-glutamyl-[protein] + CoA + H(+). Its function is as follows. Catalytic subunit of the NatB complex which catalyzes acetylation of the N-terminal methionine residues of peptides beginning with Met-Asp, Met-Glu, Met-Asn and Met-Gln. Proteins with cell cycle functions are overrepresented in the pool of NatB substrates. Required for maintaining the structure and function of actomyosin fibers and for proper cellular migration. This Xenopus tropicalis (Western clawed frog) protein is N-alpha-acetyltransferase 20 (naa20).